Reading from the N-terminus, the 457-residue chain is MLIDAIHGAKMSTKLLVSLKVLVIQLNPQIGQVDQTIKRTWSILDKVTKSATYVKPDIILFPEFALTGYSFHARKDILPYVTKKDEGPSFELAKSISEKFQCYTIIGYPEDDDEQKLYNSALVVNPQGEQIFNYRKTFLYDTEMNWDCEENPEGFQTFPMDFSKCAKLSNEDSYNRDVTLKASIGICMDLSPYKFMAPFNHFEFSSFCVDNNVELILCPMAWLNSTSITDKQTLHNNSLLEAAKNKIAFALKEQGLPLAGSQGIYQLKIGDSQRTPRVPSDDSTSEYKDMDEPDMSNVNYWILRFFPFLYFKSRINWFKNSSLIESILGKTRMPLDHEYYKDGKHKEDTIDLLDSEEVIKDTVLEKTFLGTSLGQPWKFQGKNAILVLANRCGTEDGTTIFAGSSGIYKFNGKKPKGSQDDDESSLDSLNESVELLGNLGKGLEGAILREVQFEVFR.

One can recognise a CN hydrolase domain in the interval 19-453 (LKVLVIQLNP…EGAILREVQF (435 aa)). E63 acts as the Proton acceptor in catalysis. Residue K136 is the Proton donor of the active site. Catalysis depends on C187, which acts as the Nucleophile.

This sequence belongs to the carbon-nitrogen hydrolase superfamily.

Deamidates N-terminal Asn and Gln. Component of a targeting complex in the N-end rule pathway. This is Protein N-terminal amidase (NTA1) from Saccharomyces cerevisiae (strain ATCC 204508 / S288c) (Baker's yeast).